A 1164-amino-acid polypeptide reads, in one-letter code: MKKNTDSEMDQRLGYKFLVPDPKAGVFYRPLHFQYVSYSNFILHRLHEILTVKRPLLSFKNNTERIMIEISNVKVTPPDYSPIIASIKGKSYDALATFTVNIFKEVMTKEGISITKISSYEGKDSHLIKIPLLIGYGNKNPLDTAKYLVPNVIGGVFINKQSVEKVGINLVEKITTWPKFRVVKPNSFTFSFSSVSPPNVLPTRYRHYKISLDISQLEASNISSTKTFITVNIVLLSQYLSRVSLEFIRRSLSYDMPPEVVYLVNAIIDSAKRITESITDFNIDTYINDLVEAEHIKQKSQLTINEFKYEMLHNFLPHMNYTPDQLKGFYMISLLRKFLYCIYHTSRYPDRDSMVCHRILTYGKYFETLAHDELENYIGNIRNDIMNNHKNRGTYAVNIHVLTTPGLNHAFSSLLSGKFKKSDGSYRTHPHYSWMQNISIPRSVGFYPDQVKISKMFSVRKYHPSQYLYFCSSDVPERGPQVGLVSQLSVLSSITNILTSEYLDLEKKICEYIRSYYKDDISYFETGFPITIENALVASLNPNMICDFVTDFRRRKRMGFFGNLEVGITLVRDHMNEIRINIGAGRLVRPFLVVDNGELMMDVCPELESRLDDMTFSDIQKEFPHVIEMVDIEQFTFSNVCESVQKFRMMSKDERKQYDLCDFPAEFRDGYVASSLVGINHNSGPRAILGCAQAKQAISCLSSDIRNKIDNGIHLMYPERPIVISKALETSKIAANCFGQHVTIALMSYKGINQEDGIIIKKQFIQRGGLDIVTAKKHQVEIPLENFNNKERDRSNAYSKLESNGLVRLNAFLESGDAIARNISSRTLEDDFARDNQISFDVSEKYTDMYKSRVERVQVELTDKVKVRVLTMKERRPILGDKFTTRTSQKGTVAYIADETELPYDENGITPDVIINSTSIFSRKTISMLIEVILTAAYSAKPYNNKGENRPVCFPSSNETSIDTYMQFAKQCYEHSNPKLSDEELSDKIFCEKILYDPETDKPYASKVFFGPIYYLRLRHLTQDKATVRCRGKKTKLIRQANEGRKRGGGIKFGEMERDCLIAHGAANTITEVLKDSEEDYQDVYVCENCGDIAAQIKGINTCLRCSKLNLSPLLTKIDTTHVSKVFLTQMNARGVKVKLDFERRPPSFYKPLDKVDLKPSFLV.

The protein belongs to the RNA polymerase beta chain family. The DNA-dependent RNA polymerase used for intermediate and late genes expression consists of eight subunits (147) kDa, (133) kDa, (35) kDa, (30) kDa, (22) kDa, (19) kDa, (18) kDa and (7) kDa totalling more than 500 kDa in mass. The same holoenzyme, with the addition of the transcription-specificity factor RAP94, is used for early gene expression.

The protein localises to the virion. The catalysed reaction is RNA(n) + a ribonucleoside 5'-triphosphate = RNA(n+1) + diphosphate. In terms of biological role, part of the DNA-dependent RNA polymerase which catalyzes the transcription of viral DNA into RNA using the four ribonucleoside triphosphates as substrates. Responsible for the transcription of early, intermediate and late genes. DNA-dependent RNA polymerase associates with the early transcription factor (ETF), itself composed of D6 and A7, thereby allowing the early genes transcription. Late transcription, and probably also intermediate transcription, require newly synthesized RNA polymerase. This chain is DNA-directed RNA polymerase 132 kDa polypeptide (RPO132), found in Oryctolagus cuniculus (Rabbit).